A 590-amino-acid polypeptide reads, in one-letter code: CTP synthase (590 aa).

An amidoligase domain region spans residues 1–278; the sequence is MRKHPQSATK…DAFVVRRLNL (278 aa). Position 20 (Ser-20) interacts with CTP. Ser-20 contacts UTP. ATP-binding positions include 21 to 26 and Asp-78; that span reads SLGKGL. Mg(2+)-binding residues include Asp-78 and Glu-152. CTP is bound by residues 159–161, 199–204, and Lys-235; these read DIE and KTKPTQ. Residues 199 to 204 and Lys-235 each bind UTP; that span reads KTKPTQ. The region spanning 303-551 is the Glutamine amidotransferase type-1 domain; the sequence is RIALVGKYVD…VGAAIDYKSA (249 aa). Gly-366 is an L-glutamine binding site. Cys-393 serves as the catalytic Nucleophile; for glutamine hydrolysis. L-glutamine is bound by residues 394-397, Glu-416, and Arg-477; that span reads LGLQ. Catalysis depends on residues His-524 and Glu-526. Residues 566–590 are disordered; that stretch reads EHLPNSSNQHRDGVERSFPAPAARG.

The protein belongs to the CTP synthase family. Homotetramer.

The enzyme catalyses UTP + L-glutamine + ATP + H2O = CTP + L-glutamate + ADP + phosphate + 2 H(+). The catalysed reaction is L-glutamine + H2O = L-glutamate + NH4(+). It carries out the reaction UTP + NH4(+) + ATP = CTP + ADP + phosphate + 2 H(+). It functions in the pathway pyrimidine metabolism; CTP biosynthesis via de novo pathway; CTP from UDP: step 2/2. Allosterically activated by GTP, when glutamine is the substrate; GTP has no effect on the reaction when ammonia is the substrate. The allosteric effector GTP functions by stabilizing the protein conformation that binds the tetrahedral intermediate(s) formed during glutamine hydrolysis. Inhibited by the product CTP, via allosteric rather than competitive inhibition. Catalyzes the ATP-dependent amination of UTP to CTP with either L-glutamine or ammonia as the source of nitrogen. Regulates intracellular CTP levels through interactions with the four ribonucleotide triphosphates. This is CTP synthase from Mycobacterium leprae (strain Br4923).